Here is a 325-residue protein sequence, read N- to C-terminus: Lipoyl synthase (325 aa).

The segment at M1–R33 is disordered. The span at L8 to R33 shows a compositional bias: basic and acidic residues. Residues C64, C69, C75, C90, C94, C97, and S303 each contribute to the [4Fe-4S] cluster site. In terms of domain architecture, Radical SAM core spans W76–L292.

It belongs to the radical SAM superfamily. Lipoyl synthase family. [4Fe-4S] cluster is required as a cofactor.

It localises to the cytoplasm. It catalyses the reaction [[Fe-S] cluster scaffold protein carrying a second [4Fe-4S](2+) cluster] + N(6)-octanoyl-L-lysyl-[protein] + 2 oxidized [2Fe-2S]-[ferredoxin] + 2 S-adenosyl-L-methionine + 4 H(+) = [[Fe-S] cluster scaffold protein] + N(6)-[(R)-dihydrolipoyl]-L-lysyl-[protein] + 4 Fe(3+) + 2 hydrogen sulfide + 2 5'-deoxyadenosine + 2 L-methionine + 2 reduced [2Fe-2S]-[ferredoxin]. It functions in the pathway protein modification; protein lipoylation via endogenous pathway; protein N(6)-(lipoyl)lysine from octanoyl-[acyl-carrier-protein]: step 2/2. In terms of biological role, catalyzes the radical-mediated insertion of two sulfur atoms into the C-6 and C-8 positions of the octanoyl moiety bound to the lipoyl domains of lipoate-dependent enzymes, thereby converting the octanoylated domains into lipoylated derivatives. In Caulobacter vibrioides (strain ATCC 19089 / CIP 103742 / CB 15) (Caulobacter crescentus), this protein is Lipoyl synthase.